A 355-amino-acid chain; its full sequence is Guanine nucleotide-binding protein alpha-12 subunit (355 aa).

A G-alpha domain is found at 28–355 (RQINLLLLGS…EQNLKTLMMQ (328 aa)). A G1 motif region spans residues 31–44 (NLLLLGSGESGKST). Residues 36–43 (GSGESGKS), 176–182 (LFCRKAT), 201–205 (DVGGQ), 270–273 (NKND), and Ala-327 each bind GTP. 2 residues coordinate Mg(2+): Ser-43 and Thr-182. The interval 174–182 (DILFCRKAT) is G2 motif. A G3 motif region spans residues 197–206 (FRFIDVGGQR). Residues 266–273 (ILFMNKND) are G4 motif. The tract at residues 325-330 (TTAVDT) is G5 motif.

Belongs to the G-alpha family. G proteins are composed of 3 units; alpha, beta and gamma. The alpha chain contains the guanine nucleotide binding site.

In terms of biological role, guanine nucleotide-binding proteins (G proteins) are involved as modulators or transducers in various transmembrane signaling systems. May play a role in resistance to fungal infection in the epidermis by regulating the up-regulation of several antimicrobial peptides of the NLP and CNC families. Upstream of plc-3, egl-8, tpa-1 and the p38-like pathway, required for the expression of antimicrobial peptide nlp-29 in the epidermis in response to fungal infection or physical injury. This Caenorhabditis briggsae protein is Guanine nucleotide-binding protein alpha-12 subunit (gpa-12).